Reading from the N-terminus, the 123-residue chain is Small ribosomal subunit protein uS12 (123 aa).

Asp-89 carries the post-translational modification 3-methylthioaspartic acid.

It belongs to the universal ribosomal protein uS12 family. As to quaternary structure, part of the 30S ribosomal subunit. Contacts proteins S8 and S17. May interact with IF1 in the 30S initiation complex.

Functionally, with S4 and S5 plays an important role in translational accuracy. Its function is as follows. Interacts with and stabilizes bases of the 16S rRNA that are involved in tRNA selection in the A site and with the mRNA backbone. Located at the interface of the 30S and 50S subunits, it traverses the body of the 30S subunit contacting proteins on the other side and probably holding the rRNA structure together. The combined cluster of proteins S8, S12 and S17 appears to hold together the shoulder and platform of the 30S subunit. The protein is Small ribosomal subunit protein uS12 of Bartonella bacilliformis (strain ATCC 35685 / KC583 / Herrer 020/F12,63).